Consider the following 163-residue polypeptide: Translation initiation factor IF-3-like (163 aa).

This sequence belongs to the IF-3 family.

The protein is Translation initiation factor IF-3-like of Nostoc sp. (strain PCC 7120 / SAG 25.82 / UTEX 2576).